Consider the following 180-residue polypeptide: Membrane protein UL121 (180 aa).

Residues 1–27 (MWGCGWSRILVLLLLMCMALMARGTYG) form the signal peptide. The helical transmembrane segment at 143–163 (LGLLYAVCLILSFSIVTAALW) threads the bilayer.

Belongs to the HHV-5 UL121 protein family.

It localises to the host membrane. The polypeptide is Membrane protein UL121 (UL121) (Human cytomegalovirus (strain Merlin) (HHV-5)).